Reading from the N-terminus, the 264-residue chain is uncharacterized protein (264 aa).

The chain crosses the membrane as a helical span at residues Leu-7–Thr-27.

The protein belongs to the staphylococcal tandem lipoprotein family.

It is found in the cell membrane. This is an uncharacterized protein from Staphylococcus aureus (strain MW2).